The following is a 966-amino-acid chain: Translation initiation factor IF-2 (966 aa).

Composition is skewed to basic and acidic residues over residues 99–113 (KRDEAGADQHNEAAD), 123–183 (EQAR…KAEE), 197–212 (DASRKKAEDEQARVAV), 220–249 (AADDAKAAADKARAEQDAARKRREAAEAEA), and 266–277 (PSERKAEEKKAE). The segment at 99-382 (KRDEAGADQH…NFQAPTEPVV (284 aa)) is disordered. Residues 304–315 (AATTTTTTATTT) are compositionally biased toward low complexity. Residues 346 to 359 (SSGGVGGWRGGPRG) show a composition bias toward gly residues. A tr-type G domain is found at 466 to 635 (PRPPVVTVMG…LLQAEVLELK (170 aa)). The segment at 475–482 (GHVDHGKT) is G1. 475–482 (GHVDHGKT) is a binding site for GTP. The segment at 500-504 (GITQH) is G2. The interval 521–524 (DTPG) is G3. Residues 521–525 (DTPGH) and 575–578 (NKID) each bind GTP. The G4 stretch occupies residues 575–578 (NKID). Residues 611-613 (SAK) form a G5 region.

Belongs to the TRAFAC class translation factor GTPase superfamily. Classic translation factor GTPase family. IF-2 subfamily.

It is found in the cytoplasm. Functionally, one of the essential components for the initiation of protein synthesis. Protects formylmethionyl-tRNA from spontaneous hydrolysis and promotes its binding to the 30S ribosomal subunits. Also involved in the hydrolysis of GTP during the formation of the 70S ribosomal complex. The sequence is that of Translation initiation factor IF-2 from Cupriavidus pinatubonensis (strain JMP 134 / LMG 1197) (Cupriavidus necator (strain JMP 134)).